We begin with the raw amino-acid sequence, 427 residues long: Glutamate-1-semialdehyde 2,1-aminomutase (427 aa).

Lysine 265 carries the N6-(pyridoxal phosphate)lysine modification.

It belongs to the class-III pyridoxal-phosphate-dependent aminotransferase family. HemL subfamily. As to quaternary structure, homodimer. The cofactor is pyridoxal 5'-phosphate.

The protein resides in the cytoplasm. It carries out the reaction (S)-4-amino-5-oxopentanoate = 5-aminolevulinate. It functions in the pathway porphyrin-containing compound metabolism; protoporphyrin-IX biosynthesis; 5-aminolevulinate from L-glutamyl-tRNA(Glu): step 2/2. This is Glutamate-1-semialdehyde 2,1-aminomutase from Pseudomonas putida (strain ATCC 700007 / DSM 6899 / JCM 31910 / BCRC 17059 / LMG 24140 / F1).